A 346-amino-acid chain; its full sequence is Biotin synthase (346 aa).

The Radical SAM core domain maps to 38–256; that stretch reads RQVQVSTLLS…IAVARIMMPT (219 aa). Residues Cys53, Cys57, and Cys60 each coordinate [4Fe-4S] cluster. Residues Cys97, Cys128, Cys188, and Arg260 each coordinate [2Fe-2S] cluster.

This sequence belongs to the radical SAM superfamily. Biotin synthase family. In terms of assembly, homodimer. [4Fe-4S] cluster serves as cofactor. Requires [2Fe-2S] cluster as cofactor.

The enzyme catalyses (4R,5S)-dethiobiotin + (sulfur carrier)-SH + 2 reduced [2Fe-2S]-[ferredoxin] + 2 S-adenosyl-L-methionine = (sulfur carrier)-H + biotin + 2 5'-deoxyadenosine + 2 L-methionine + 2 oxidized [2Fe-2S]-[ferredoxin]. It functions in the pathway cofactor biosynthesis; biotin biosynthesis; biotin from 7,8-diaminononanoate: step 2/2. In terms of biological role, catalyzes the conversion of dethiobiotin (DTB) to biotin by the insertion of a sulfur atom into dethiobiotin via a radical-based mechanism. In Escherichia coli (strain SE11), this protein is Biotin synthase.